A 309-amino-acid chain; its full sequence is Protein RTM1 (309 aa).

7 consecutive transmembrane segments (helical) span residues 22–42 (AIAL…QVVW), 83–103 (TFSA…GYIA), 119–139 (IQAV…YMLF), 162–182 (FFVF…GLMA), 193–213 (LITA…INEF), 233–253 (WWFL…RSIV), and 278–298 (AVPM…GNIF).

It belongs to the lipid-translocating exporter (LTE) (TC 9.A.26.1) family.

The protein localises to the membrane. Functionally, confers resistance to molasses (to a particular toxic element present in some molasses). The chain is Protein RTM1 (RTM1) from Saccharomyces cerevisiae (Baker's yeast).